Here is a 341-residue protein sequence, read N- to C-terminus: Phenazine O-methyltransferase PhzM (341 aa).

S-adenosyl-L-methionine-binding positions include aspartate 205 and 231-233 (GDF). Histidine 251 acts as the Proton acceptor in catalysis.

It belongs to the class I-like SAM-binding methyltransferase superfamily. Cation-independent O-methyltransferase family. In terms of assembly, homodimer.

The enzyme catalyses 1,6-dihydroxyphenazine + S-adenosyl-L-methionine = 1-hydroxy-6-methoxyphenazine + S-adenosyl-L-homocysteine + H(+). The catalysed reaction is 1-hydroxy-6-methoxyphenazine + S-adenosyl-L-methionine = 1,6-dimethoxyphenazine + S-adenosyl-L-homocysteine + H(+). It catalyses the reaction 1-hydroxy-6-methoxyphenazine N(10)-oxide + S-adenosyl-L-methionine = 1,6-dimethoxyphenazine N(5)-oxide + S-adenosyl-L-homocysteine. It carries out the reaction 1,6-dihydroxyphenazine N(5),N(10)-dioxide + S-adenosyl-L-methionine = 1-hydroxy-6-methoxyphenazine N(5),N(10)-dioxide + S-adenosyl-L-homocysteine. The enzyme catalyses 1-hydroxy-6-methoxyphenazine N(5),N(10)-dioxide + S-adenosyl-L-methionine = 1,6-dimethoxyphenazine N(5),N(10)-dioxide + S-adenosyl-L-homocysteine. Functionally, involved in the biosynthesis of phenazine natural products including myxin, an N(5),N(10)-dioxide phenazine antiobiotic, which has antimicrobial activity. O-methyltransferase, which converts iodinin (1,6-dihydroxyphenazine N(5),N(10)-dioxide) to myxin (1-hydroxy-6-methoxyphenazine N(5),N(10)-dioxide). Catalyzes both monomethoxy and dimethoxy formation of phenazine natural compounds. Acts on a wide variety of substrates, catalyzing O-methylation of phenazines with non-, mono- or di-N-oxide. Highest activity with 1,6-dihydroxyphenazine (DHP) as substrate. Less active with monohydroxy-containing and monohydroxy-monomethoxy-containing phenazines. Least active with non-phenazine substrates, such as 8-hydroxyquinoline and 6-hydroxyquinoline. Is not able to convert 1-hydroxyphenazine to 1-hydroxy-N5-methylphenazine (pyocyanine), hence does not function as an N-methyltransferase. The chain is Phenazine O-methyltransferase PhzM from Lysobacter antibioticus.